The following is a 269-amino-acid chain: Phosphatidylglycerol--prolipoprotein diacylglyceryl transferase (269 aa).

7 helical membrane-spanning segments follow: residues Ile-17–Trp-37, Phe-59–Tyr-79, Trp-95–Phe-115, Leu-123–Ile-143, Ala-181–Ile-201, Gly-206–Phe-226, and Met-242–Leu-262. Residue Arg-142 coordinates a 1,2-diacyl-sn-glycero-3-phospho-(1'-sn-glycerol).

The protein belongs to the Lgt family.

The protein localises to the cell inner membrane. The catalysed reaction is L-cysteinyl-[prolipoprotein] + a 1,2-diacyl-sn-glycero-3-phospho-(1'-sn-glycerol) = an S-1,2-diacyl-sn-glyceryl-L-cysteinyl-[prolipoprotein] + sn-glycerol 1-phosphate + H(+). It participates in protein modification; lipoprotein biosynthesis (diacylglyceryl transfer). In terms of biological role, catalyzes the transfer of the diacylglyceryl group from phosphatidylglycerol to the sulfhydryl group of the N-terminal cysteine of a prolipoprotein, the first step in the formation of mature lipoproteins. The sequence is that of Phosphatidylglycerol--prolipoprotein diacylglyceryl transferase from Paramagnetospirillum magneticum (strain ATCC 700264 / AMB-1) (Magnetospirillum magneticum).